Consider the following 540-residue polypeptide: SNW/SKI-interacting protein B (540 aa).

Disordered regions lie at residues 1–106 (MVLR…SLTV), 215–273 (GETQ…NPKG), 351–402 (GAAP…RDRD), and 502–526 (ASVAAGKRERPVEFDGPEMEEDPFH). 2 stretches are compositionally biased toward basic and acidic residues: residues 16 to 29 (PHDHTEDEWFKERY) and 83 to 94 (MGRRGGDGDGEQ). The SNW stretch occupies residues 189–353 (PEFIKYTPAR…KARAEMLGAA (165 aa)). The span at 236–251 (AGSPPVPVLRSPPRPP) shows a compositional bias: pro residues. Residues 359–382 (ERSKAAAERDAIREERRRERRLEA) are compositionally biased toward basic and acidic residues. Residues 383–393 (RAAAAAASKKS) show a composition bias toward low complexity.

It belongs to the SNW family.

It is found in the nucleus. The protein is SNW/SKI-interacting protein B of Oryza sativa subsp. japonica (Rice).